A 406-amino-acid polypeptide reads, in one-letter code: Putative nickel insertion protein (406 aa).

It belongs to the LarC family.

In Thermomicrobium roseum (strain ATCC 27502 / DSM 5159 / P-2), this protein is Putative nickel insertion protein.